Consider the following 105-residue polypeptide: Small ribosomal subunit protein uS10 (105 aa).

It belongs to the universal ribosomal protein uS10 family. Part of the 30S ribosomal subunit.

Involved in the binding of tRNA to the ribosomes. The sequence is that of Small ribosomal subunit protein uS10 from Acidobacterium capsulatum (strain ATCC 51196 / DSM 11244 / BCRC 80197 / JCM 7670 / NBRC 15755 / NCIMB 13165 / 161).